The following is a 140-amino-acid chain: RxLR effector protein Avh23 (140 aa).

Residues 1–21 form the signal peptide; sequence MRLTYFLTVIVVATLHAGGTA. Residues 54–72 carry the RxLR-dEER motif; that stretch reads RMLRKVKEDTVSKKDHEER. An ADA2-binding IR1 repeat occupies 100-113; the sequence is QGAFQRQNAFVNRD. The stretch at 114–127 is one ADA2-binding IR2 repeat; that stretch reads QGAFQRQNAFVKRA.

This sequence belongs to the RxLR effector family. Interacts with host histone acetyl transferase SAGA complex subunit ADA2.

It localises to the secreted. The protein localises to the host nucleus. The protein resides in the host cytoplasm. Its function is as follows. Effector that suppresses plant defense responses during the early stages of pathogen infection. Suppresses cell death induced by effectors and PAMPs in plant hosts. Acts as a modulator of histone acetyltransferase (HAT) in plants. Avh23 binds to the ADA2 subunit of the HAT complex SAGA and disrupts its assembly by interfering with the association of ADA2 with the catalytic subunit GCN5. As such, Avh23 suppresses H3K9 acetylation mediated by the ADA2/GCN5 module and increases plant susceptibility. The polypeptide is RxLR effector protein Avh23 (Phytophthora sojae (Soybean stem and root rot agent)).